Here is a 205-residue protein sequence, read N- to C-terminus: Protein MIS12 homolog (205 aa).

The stretch at Pro108–Ser205 forms a coiled coil.

The protein belongs to the mis12 family. Component of the MIS12 complex composed of MIS12, DSN1, NSL1 and PMF1. Also interacts with KNL1, CBX3, CBX5, NDC80 and ZWINT.

The protein localises to the chromosome. Its subcellular location is the centromere. It is found in the kinetochore. Part of the MIS12 complex which is required for normal chromosome alignment and segregation and for kinetochore formation during mitosis. Essential for proper kinetochore microtubule attachments. The chain is Protein MIS12 homolog from Homo sapiens (Human).